The sequence spans 290 residues: ATP synthase gamma chain (290 aa).

Belongs to the ATPase gamma chain family. As to quaternary structure, F-type ATPases have 2 components, CF(1) - the catalytic core - and CF(0) - the membrane proton channel. CF(1) has five subunits: alpha(3), beta(3), gamma(1), delta(1), epsilon(1). CF(0) has four main subunits: a, b, b' and c.

It localises to the cellular chromatophore membrane. Its function is as follows. Produces ATP from ADP in the presence of a proton gradient across the membrane. The gamma chain is believed to be important in regulating ATPase activity and the flow of protons through the CF(0) complex. The sequence is that of ATP synthase gamma chain from Rhodobacter capsulatus (Rhodopseudomonas capsulata).